Consider the following 415-residue polypeptide: MHSTSLSLAQVDPEILAAINKESERQQFGLEMIASENYTSKAVMEAQGSILTNKYAEGYPGKRYYGGCVNVDTVESLAIERAKKLFGVQYANVQPHSGSQANMGVYLAACKAGETILGMDLSHGGHLTHGSPVNFSGMLFKAASYKLDPETGRLNYDTIRATAKEVQPKLIIAGYSAYPRTLDFAKFKEIADEVGAQLLVDMAHFAGLVATGHHPSPVPYADYITTTTHKTLRGPRGGMILTNSEEKAKTMNSRIFPGIQGGPLEHVIAGKAVAFGEALKPEFKDYSGKVVSNAKVLAEELLSAGFKLVTGGTDNHLILVDLSDREITGKLAENSLDEAGITVNKNTVPNEKRSPFVTSGVRIGTPALTTRGMGPAEMKQIAKWIGQVLNNAEDAGVKNRVHEEVKELCKQFPIY.

(6S)-5,6,7,8-tetrahydrofolate contacts are provided by residues Leu-121 and 125 to 127 (GHL). Lys-230 carries the N6-(pyridoxal phosphate)lysine modification. (6S)-5,6,7,8-tetrahydrofolate contacts are provided by residues Glu-246 and 354-356 (SPF).

It belongs to the SHMT family. In terms of assembly, homodimer. It depends on pyridoxal 5'-phosphate as a cofactor.

It localises to the cytoplasm. The enzyme catalyses (6R)-5,10-methylene-5,6,7,8-tetrahydrofolate + glycine + H2O = (6S)-5,6,7,8-tetrahydrofolate + L-serine. The protein operates within one-carbon metabolism; tetrahydrofolate interconversion. Its pathway is amino-acid biosynthesis; glycine biosynthesis; glycine from L-serine: step 1/1. In terms of biological role, catalyzes the reversible interconversion of serine and glycine with tetrahydrofolate (THF) serving as the one-carbon carrier. This reaction serves as the major source of one-carbon groups required for the biosynthesis of purines, thymidylate, methionine, and other important biomolecules. Also exhibits THF-independent aldolase activity toward beta-hydroxyamino acids, producing glycine and aldehydes, via a retro-aldol mechanism. The sequence is that of Serine hydroxymethyltransferase from Bdellovibrio bacteriovorus (strain ATCC 15356 / DSM 50701 / NCIMB 9529 / HD100).